The chain runs to 202 residues: Putative NAD(P)H nitroreductase YodC (202 aa).

Residues Arg-11 to Ser-13, Gln-68 to Gln-70, Gly-155 to Gly-156, and Arg-192 each bind FMN.

The protein belongs to the nitroreductase family. It depends on FMN as a cofactor.

The protein localises to the cytoplasm. Its function is as follows. Putative nitroreductase that may contribute to the degradation of aromatic compounds. The protein is Putative NAD(P)H nitroreductase YodC (yodC) of Bacillus subtilis (strain 168).